Here is a 373-residue protein sequence, read N- to C-terminus: Zinc finger CCCH domain-containing protein 15 homolog (373 aa).

The disordered stretch occupies residues 1-27 (MPPKQAQSKKTVEKEKKKKVEDKTFGL). Residues 10-25 (KTVEKEKKKKVEDKTF) show a composition bias toward basic and acidic residues. 2 C3H1-type zinc fingers span residues 95–123 (DPKSIVCEYFKQGVTCPKGNRCKFAHDLA) and 167–205 (KPTAIICKFFLDAIESKKYGWFWECPNGGEKCAYQHCLP). A coiled-coil region spans residues 252–326 (KEEKRLQKEK…ALANQINTSL (75 aa)). A disordered region spans residues 325–373 (SLFTDGGVLPSDDDDDDDDDDDDDEDGDDEEEDDDEEEGEYEEEEASDE). Positions 335 to 373 (SDDDDDDDDDDDDDEDGDDEEEDDDEEEGEYEEEEASDE) are enriched in acidic residues.

It belongs to the ZC3H15/TMA46 family.

This is Zinc finger CCCH domain-containing protein 15 homolog from Dictyostelium discoideum (Social amoeba).